A 441-amino-acid polypeptide reads, in one-letter code: Lysine histidine transporter 2 (441 aa).

Residues 1–32 are Cytoplasmic-facing; the sequence is MGNSEMSASEVAAAKQKNVDDWLPITSSRNAK. A helical transmembrane segment spans residues 33–53; sequence WWYSAFHNVTAMVGAGVLSLP. The Extracellular portion of the chain corresponds to 54-58; sequence YAMSN. Residues 59 to 79 form a helical membrane-spanning segment; sequence LGWGPGVTIMVMSWIITLYTL. The Cytoplasmic portion of the chain corresponds to 80–110; that stretch reads WQMVEMHEIVPGKRLDRYHELGQHAFGEKLG. Residues 111–131 traverse the membrane as a helical segment; it reads LWIVVPQQLIVEVGVDIVYMV. The Extracellular segment spans residues 132–152; that stretch reads TGGASLKKVHQLVCPDCKEIR. A helical membrane pass occupies residues 153–173; the sequence is TTFWIMIFASVHFVISHLPNF. The Cytoplasmic portion of the chain corresponds to 174-175; it reads NS. A helical transmembrane segment spans residues 176 to 196; it reads ISIISLAAAVMSLTYSTIAWA. The Extracellular segment spans residues 197–222; that stretch reads ASVHKGVHPDVDYSPRASTDVGKVFN. Residues 223–243 traverse the membrane as a helical segment; sequence FLNALGDVAFAYAGHNVVLEI. The Cytoplasmic portion of the chain corresponds to 244-263; it reads QATIPSTPEMPSKVPMWRGV. A helical membrane pass occupies residues 264 to 284; it reads IVAYIVVAICYFPVAFLGYYI. At 285-300 the chain is on the extracellular side; it reads FGNSVDDNILITLEKP. A helical membrane pass occupies residues 301-321; the sequence is IWLIAMANMFVVIHVIGSYQI. The Cytoplasmic portion of the chain corresponds to 322 to 347; it reads FAMPVFDMLETVLVKKMNFNPSFKLR. A helical membrane pass occupies residues 348–370; it reads FITRSLYVAFTMIVAICVPFFGG. Residues 371-373 lie on the Extracellular side of the membrane; that stretch reads LLG. The helical transmembrane segment at 374 to 396 threads the bilayer; it reads FFGGFAFAPTTYYLPCIMWLVLK. At 397-406 the chain is on the cytoplasmic side; it reads KPKRFGLSWT. Residues 407-427 form a helical membrane-spanning segment; it reads ANWFCIIVGVLLTILAPIGGL. At 428-441 the chain is on the extracellular side; the sequence is RTIIINAKTYKFFS.

Belongs to the amino acid/polyamine transporter 2 family. Amino acid/auxin permease (AAAP) (TC 2.A.18.2) subfamily. In terms of tissue distribution, expressed in flower buds and to lower levels in leaves and stems. Not detected in roots and siliques. Restricted to the tapetum cell layer.

The protein localises to the cell membrane. Inhibited by diethylstibestrol (DES), 2,4-dinitrophenol (DNP) and carbonlycyanide m-chlorophenylhydrazone (CCCP). Amino acid-proton symporter. Transporter with a broad specificity for neutral and acidic amino acids. Basic amino acids are only marginally transported. Involved in import of amino acids into the tapetum cells for synthesis of compounds important for microspore structure. The sequence is that of Lysine histidine transporter 2 (LHT2) from Arabidopsis thaliana (Mouse-ear cress).